The sequence spans 671 residues: DNA ligase (671 aa).

Residues 38-42 (DKEFD), 87-88 (SL), and Glu-113 contribute to the NAD(+) site. Lys-115 (N6-AMP-lysine intermediate) is an active-site residue. Residues Arg-136, Glu-170, Lys-282, and Lys-306 each contribute to the NAD(+) site. Residues Cys-396, Cys-399, Cys-414, and Cys-419 each contribute to the Zn(2+) site. Residues 586 to 671 (SDLQPFVGQS…LLKQEGIAID (86 aa)) form the BRCT domain.

Belongs to the NAD-dependent DNA ligase family. LigA subfamily. Mg(2+) is required as a cofactor. Requires Mn(2+) as cofactor.

The enzyme catalyses NAD(+) + (deoxyribonucleotide)n-3'-hydroxyl + 5'-phospho-(deoxyribonucleotide)m = (deoxyribonucleotide)n+m + AMP + beta-nicotinamide D-nucleotide.. Functionally, DNA ligase that catalyzes the formation of phosphodiester linkages between 5'-phosphoryl and 3'-hydroxyl groups in double-stranded DNA using NAD as a coenzyme and as the energy source for the reaction. It is essential for DNA replication and repair of damaged DNA. This chain is DNA ligase, found in Leptospira biflexa serovar Patoc (strain Patoc 1 / Ames).